A 449-amino-acid chain; its full sequence is MLKVLLVGSGAREHAIAEALCGAPDEDVELYAFMGNRNPGIIRLAEDYVVGDPTDVEAVARAAADWNVDFAVVGPEDPLAEGVADRLEEEGIPTFGPKRGPARIEWDKGFARELMEKYDIPGRPEFGIFEDPDEACDFIDELGKPVAVKPAGLTGGKGVKVVGDQLKNLDEAKEYVKEIFEEDIGGIPKVIIEEKCVGEEYTIQAYTDGEKVIPTPAVQDHPHAYEGDKGPITGGMGSYSCPDGLLPFITKEDYERSVEILERTVEAIKKETGEPYRGVLYGQFMLTAEGPVVIEFNCRYGDPEAMNILPIAEGDIVTLHASIAEGSMEGEIEFLEKATVCKYVVPEGYPESSEGEGDVIEVDEECIHRYDAVPYYASVNLDEDGKIRMTSSRALAIVGIGDELEQAEEAAESAIRECVSGERIRHRSDIGKHETVEKRVRRMKRIRGE.

The 214-residue stretch at 112–325 (RELMEKYDIP…IVTLHASIAE (214 aa)) folds into the ATP-grasp domain. Residue 139–202 (IDELGKPVAV…EEKCVGEEYT (64 aa)) coordinates ATP. Residues Gln-283, Glu-295, and Asn-297 each coordinate Mg(2+). Residues Gln-283, Glu-295, and Asn-297 each coordinate Mn(2+).

The protein belongs to the GARS family. It depends on Mg(2+) as a cofactor. The cofactor is Mn(2+).

It catalyses the reaction 5-phospho-beta-D-ribosylamine + glycine + ATP = N(1)-(5-phospho-beta-D-ribosyl)glycinamide + ADP + phosphate + H(+). It functions in the pathway purine metabolism; IMP biosynthesis via de novo pathway; N(1)-(5-phospho-D-ribosyl)glycinamide from 5-phospho-alpha-D-ribose 1-diphosphate: step 2/2. This Methanopyrus kandleri (strain AV19 / DSM 6324 / JCM 9639 / NBRC 100938) protein is Phosphoribosylamine--glycine ligase.